A 314-amino-acid chain; its full sequence is Methionyl-tRNA formyltransferase (314 aa).

110-113 (SLLP) contacts (6S)-5,6,7,8-tetrahydrofolate.

It belongs to the Fmt family.

The catalysed reaction is L-methionyl-tRNA(fMet) + (6R)-10-formyltetrahydrofolate = N-formyl-L-methionyl-tRNA(fMet) + (6S)-5,6,7,8-tetrahydrofolate + H(+). Functionally, attaches a formyl group to the free amino group of methionyl-tRNA(fMet). The formyl group appears to play a dual role in the initiator identity of N-formylmethionyl-tRNA by promoting its recognition by IF2 and preventing the misappropriation of this tRNA by the elongation apparatus. The sequence is that of Methionyl-tRNA formyltransferase from Bacillus cereus (strain AH187).